The following is a 603-amino-acid chain: Leucine-rich repeat-containing protein 40 (603 aa).

The tract at residues 1–27 (MAAARRARAGDPRAGFRRAAEEQSPAV) is disordered. 20 LRR repeats span residues 83-104 (DLTK…VRLL), 106-127 (ALTV…LGQL), 129-150 (NLQK…LLQL), 152-173 (HLKG…FGQL), 175-196 (SLEE…FALL), 198-219 (NLVR…ISAM), 221-242 (SLRQ…LASM), 244-265 (SLEQ…PSCK), 266-286 (LLKE…ENLK), 290-311 (SLSV…ITLL), 313-335 (KLER…GNLS), 336-357 (QLKF…LLQK), 401-422 (TLKL…VFSA), 427-449 (PVTS…VELK), 451-473 (SVCD…CTLH), 474-495 (KLTH…MEAL), 497-518 (RLQV…LYRM), 520-541 (ALET…QLKK), 544-565 (QLGT…LGNC), and 567-588 (TLRT…ILAK).

This Gallus gallus (Chicken) protein is Leucine-rich repeat-containing protein 40 (LRRC40).